A 566-amino-acid polypeptide reads, in one-letter code: Proline--tRNA ligase (566 aa).

Belongs to the class-II aminoacyl-tRNA synthetase family. ProS type 1 subfamily. Homodimer.

The protein resides in the cytoplasm. It carries out the reaction tRNA(Pro) + L-proline + ATP = L-prolyl-tRNA(Pro) + AMP + diphosphate. Catalyzes the attachment of proline to tRNA(Pro) in a two-step reaction: proline is first activated by ATP to form Pro-AMP and then transferred to the acceptor end of tRNA(Pro). As ProRS can inadvertently accommodate and process non-cognate amino acids such as alanine and cysteine, to avoid such errors it has two additional distinct editing activities against alanine. One activity is designated as 'pretransfer' editing and involves the tRNA(Pro)-independent hydrolysis of activated Ala-AMP. The other activity is designated 'posttransfer' editing and involves deacylation of mischarged Ala-tRNA(Pro). The misacylated Cys-tRNA(Pro) is not edited by ProRS. This is Proline--tRNA ligase from Shouchella clausii (strain KSM-K16) (Alkalihalobacillus clausii).